Reading from the N-terminus, the 240-residue chain is Urease accessory protein UreF (240 aa).

This sequence belongs to the UreF family. As to quaternary structure, ureD, UreF and UreG form a complex that acts as a GTP-hydrolysis-dependent molecular chaperone, activating the urease apoprotein by helping to assemble the nickel containing metallocenter of UreC. The UreE protein probably delivers the nickel.

The protein resides in the cytoplasm. Required for maturation of urease via the functional incorporation of the urease nickel metallocenter. The polypeptide is Urease accessory protein UreF (Bradyrhizobium sp. (strain ORS 278)).